A 626-amino-acid polypeptide reads, in one-letter code: Probable potassium transport system protein Kup (626 aa).

13 helical membrane-spanning segments follow: residues 8-28, 44-64, 102-122, 139-159, 171-191, 196-216, 217-237, 249-269, 281-301, 339-359, 377-397, 399-419, and 421-441; these read VALPAMTLAALGVVFGDIGTS, ISEATVFGILSLIFWCITLSI, IYLIALGFVGASLFFGDGIIT, PAFDRWLIPIGLGILTALFMV, FGPITMLWFISIGALGLYSII, ILWFINPIWAIEFAIHQPFVA, FVAMGSVVLTMTGGEALYADM, WFIVVCPSLMLNYAGQGALLL, LLVPEWALFPMIGLATAAAVI, IYVPFINWVLYISVFFLIILF, MLCVTILISVLAYGAWGWPWW, VTLFAVPFLALDGIFVASTSL, and ILSGGWVPFVIGVVVFTILMT.

It belongs to the HAK/KUP transporter (TC 2.A.72) family.

It localises to the cell inner membrane. It catalyses the reaction K(+)(in) + H(+)(in) = K(+)(out) + H(+)(out). Its function is as follows. Transport of potassium into the cell. Likely operates as a K(+):H(+) symporter. The protein is Probable potassium transport system protein Kup of Acinetobacter baylyi (strain ATCC 33305 / BD413 / ADP1).